The primary structure comprises 200 residues: Dephospho-CoA kinase (200 aa).

Residues 2-200 (LIAVVGKAGV…CHHGHYQTPK (199 aa)) enclose the DPCK domain. 10-15 (GVGKTT) serves as a coordination point for ATP.

The protein belongs to the CoaE family.

The protein localises to the cytoplasm. It catalyses the reaction 3'-dephospho-CoA + ATP = ADP + CoA + H(+). The protein operates within cofactor biosynthesis; coenzyme A biosynthesis; CoA from (R)-pantothenate: step 5/5. Catalyzes the phosphorylation of the 3'-hydroxyl group of dephosphocoenzyme A to form coenzyme A. The sequence is that of Dephospho-CoA kinase from Mycoplasma pneumoniae (strain ATCC 29342 / M129 / Subtype 1) (Mycoplasmoides pneumoniae).